Consider the following 1452-residue polypeptide: Pleiotropic drug resistance protein 1 (1452 aa).

The ABC transporter 1 domain maps to 152–425 (LNYLHILPNR…FEYMGFICPE (274 aa)). Position 185 to 192 (185 to 192 (GPPSSGKT)) interacts with ATP. Residues 504 to 716 (LLKACTAREY…AQNAIAVNEF (213 aa)) enclose the ABC transmembrane type-2 1 domain. Transmembrane regions (helical) follow at residues 521–541 (FVYIFKMIQLTLMASITMTLF), 554–574 (GAVFLGALFYALIMIMFNGFS), 609–629 (IPITLVEVAIWVCMTYYVIGF), 640–660 (LLLLICVNQMASGLFRLMGAL), 664–684 (IIVANTFGSFVLLTVLVMGGF), 694–714 (WWIWGYWISPMMYAQNAIAVN), and 753–773 (IGAGALIGYVFLFNFLFAVAL). Residues 808–830 (LGKSSSEKGNDVRRSASSRSMSS) form a disordered region. Positions 812–821 (SSEKGNDVRR) are enriched in basic and acidic residues. Residues 855-1107 (ITFDDIRYAV…HLIKYFEGID (253 aa)) enclose the ABC transporter 2 domain. 900–907 (GVSGAGKT) provides a ligand contact to ATP. Positions 1180 to 1394 (TQCMACFWKQ…TLYGLIASQF (215 aa)) constitute an ABC transmembrane type-2 2 domain. The next 7 helical transmembrane spans lie at 1199–1219 (YTAVRIMFTFFIALMFGTIFW), 1239–1259 (YIAVLFLGVQNATTVQPVIAI), 1287–1307 (LPYLFLQTIIYGVIVYAMIGF), 1314–1334 (FFWYLFFMYFTLLYFTLYGMM), 1344–1364 (IAAIISSAFYAVWNLFCGFIV), 1375–1395 (WYYYICPISWTLYGLIASQFG), and 1421–1441 (FVGYVALILVGISVLFLFIFA).

Belongs to the ABC transporter superfamily. ABCG family. PDR (TC 3.A.1.205) subfamily. Expressed in root hypodermal passage cells. Expressed in stem tissues, particularly the vasculature and nodes adjacent to leaf axils.

Its subcellular location is the cell membrane. Functionally, cellular strigolactone (SL) transporter required for the exudation of SL from the root to the soil. The presence of SL in the vicinity of the roots is required for development of symbiotic interactions with arbuscular mycorrhizal fungi (AMF). Transports SL in the above ground tissues and is required for the control of shoot branching. SL regulates plant shoot architecture by inhibiting the outgrowth of axillary buds. Involved in the regulation of shootward and outward directional strigolactone transport in roots. Due to its polar localization in root cells, mediates directional shootward strigolactone transport, as well as localized outward directional transport for exudation to the soil. The sequence is that of Pleiotropic drug resistance protein 1 from Petunia hybrida (Petunia).